The primary structure comprises 35 residues: Photosystem II reaction center protein T (35 aa).

The helical transmembrane segment at 3 to 23 (ALVYTFLLVSTLGIIFFAIFF) threads the bilayer.

The protein belongs to the PsbT family. PSII is composed of 1 copy each of membrane proteins PsbA, PsbB, PsbC, PsbD, PsbE, PsbF, PsbH, PsbI, PsbJ, PsbK, PsbL, PsbM, PsbT, PsbY, PsbZ, Psb30/Ycf12, at least 3 peripheral proteins of the oxygen-evolving complex and a large number of cofactors. It forms dimeric complexes.

It localises to the plastid. Its subcellular location is the chloroplast thylakoid membrane. Functionally, found at the monomer-monomer interface of the photosystem II (PS II) dimer, plays a role in assembly and dimerization of PSII. PSII is a light-driven water plastoquinone oxidoreductase, using light energy to abstract electrons from H(2)O, generating a proton gradient subsequently used for ATP formation. This Citrus sinensis (Sweet orange) protein is Photosystem II reaction center protein T.